The chain runs to 102 residues: NADH-quinone oxidoreductase subunit K (102 aa).

3 helical membrane-spanning segments follow: residues 2–22 (LDFY…GVIL), 26–46 (IFTI…IFAT), and 58–78 (VIVM…LALI).

This sequence belongs to the complex I subunit 4L family. As to quaternary structure, NDH-1 is composed of 14 different subunits. Subunits NuoA, H, J, K, L, M, N constitute the membrane sector of the complex.

The protein resides in the cell inner membrane. The enzyme catalyses a quinone + NADH + 5 H(+)(in) = a quinol + NAD(+) + 4 H(+)(out). NDH-1 shuttles electrons from NADH, via FMN and iron-sulfur (Fe-S) centers, to quinones in the respiratory chain. The immediate electron acceptor for the enzyme in this species is believed to be ubiquinone. Couples the redox reaction to proton translocation (for every two electrons transferred, four hydrogen ions are translocated across the cytoplasmic membrane), and thus conserves the redox energy in a proton gradient. The protein is NADH-quinone oxidoreductase subunit K of Campylobacter fetus subsp. fetus (strain 82-40).